The chain runs to 655 residues: MSTIADSKNHGHQKLTAAGLLISLGIIYGDIGTSPLYVMKAIAGGNVISENLILGGLSCVFWTITLQTTIKYVIITLRADNKGEGGIFSLFALIRRRNPNLVWPAMIGGAAMLADGIITPPISVSSAVEGLLIFNKDIPTIPIVLAIIVMLFMIQRFGTNIVGKFFGPIMFIWFAMLATLGLSQLMGNFYVLKAINPMYAFNLLTQYTTVDDKSGFWLLGAVFLCTTGAEALYSDLGHCGRPNIRISWIFVKLALLINYFGQGAWILQNKGYVIKGNPFFGIMPEWFIVYGIIIATMAAIIASQAMISGSYTLISEALRLNLWPKVRVKYPSVKKGQLFIPSINLLLLAGCIFVVLWFGESSAMEGAYGLAINITFLMTTILLAYYLLIIKRISFIWVGLLILMYLIIEVSFLVANLEKFFHGGYFTLISSGILAFIMIIWYTAHRIKRRLTEYVKIQDYFPLIKELSEDTSIPKYSTHLIYLTGADNYTQIESKVIYSIFQKQPKRADIYWFLHIDVVDEPYTMEYKVRTMLADDVIRIDFKLGFRVEHRINLFFRKVVEDMVNNKEVDFTSRYTSLNKRNVIGDFRFVVLEKHLSNDNDLSVMEQFAMDWYFFLKHISISESSAFGLDTSSVTVEKVPMVISPMEAFQLKRVY.

A run of 12 helical transmembrane segments spans residues 19–39 (GLLISLGIIYGDIGTSPLYVM), 42–62 (IAGGNVISENLILGGLSCVFW), 102–122 (VWPAMIGGAAMLADGIITPPI), 132–152 (LIFNKDIPTIPIVLAIIVMLF), 161–181 (IVGKFFGPIMFIWFAMLATLG), 214–234 (SGFWLLGAVFLCTTGAEALYS), 246–266 (ISWIFVKLALLINYFGQGAWI), 282–302 (IMPEWFIVYGIIIATMAAIIA), 338–358 (LFIPSINLLLLAGCIFVVLWF), 370–390 (LAINITFLMTTILLAYYLLII), 395–415 (FIWVGLLILMYLIIEVSFLVA), and 420–440 (FFHGGYFTLISSGILAFIMII).

This sequence belongs to the HAK/KUP transporter (TC 2.A.72) family.

The protein resides in the cell inner membrane. It carries out the reaction K(+)(in) + H(+)(in) = K(+)(out) + H(+)(out). Its function is as follows. Transport of potassium into the cell. Likely operates as a K(+):H(+) symporter. The sequence is that of Probable potassium transport system protein Kup from Cytophaga hutchinsonii (strain ATCC 33406 / DSM 1761 / CIP 103989 / NBRC 15051 / NCIMB 9469 / D465).